The primary structure comprises 324 residues: Cuticle collagen lon-3 (324 aa).

The signal sequence occupies residues 1 to 30; the sequence is MSVTTATSGALIFSGASLLVSLFAAASIYS. Residues 119–324 form a disordered region; the sequence is VENTCPTGPD…AWRRKHKRVY (206 aa). Triple-helical region stretches follow at residues 129-152, 170-229, and 235-294; these read GEEGEQGPDGQDGVDGVPGFDGQD, GLPG…KGDD, and GRQG…SGLP. 5 stretches are compositionally biased toward low complexity: residues 136 to 151, 168 to 181, 210 to 223, 235 to 246, and 261 to 273; these read PDGQDGVDGVPGFDGQ, PQGLPGPQGSQGAP, PTGAPGDDGAPGAS, GRQGQRGQPGEQ, and EGPPGVEGEVGVP. Positions 296–311 are enriched in basic and acidic residues; sequence KDAEYCKCPTRDDGGN. Basic residues predominate over residues 314–324; sequence RAWRRKHKRVY.

The protein belongs to the cuticular collagen family. In terms of assembly, collagen polypeptide chains are complexed within the cuticle by disulfide bonds and other types of covalent cross-links.

In terms of biological role, nematode cuticles are composed largely of collagen-like proteins. The cuticle functions both as an exoskeleton and as a barrier to protect the worm from its environment. Dose-dependent regulator of body length and shape. The chain is Cuticle collagen lon-3 (lon-3) from Caenorhabditis elegans.